The primary structure comprises 1009 residues: DNA ligase 3 (1009 aa).

Residues 1–42 (MSLAFKIFFPQTLRALSRKELCLFRKHHWRDVRQFSQWSETD) constitute a mitochondrion transit peptide. Residues 93–185 (FCVDYAKRGT…QITQHIADLS (93 aa)) form a PARP-type zinc finger. Cysteine 105, cysteine 108, histidine 139, and cysteine 142 together coordinate Zn(2+). Phosphoserine occurs at positions 210, 216, 227, and 242. The segment at 224-256 (RKFSGFSAKPNNSGEAPSSPTPKRSLSSSKCDP) is disordered. Over residues 240-252 (PSSPTPKRSLSSS) the composition is skewed to low complexity. Interaction with DNA stretches follow at residues 277-280 (PSYN), 318-323 (VYNLND), 388-391 (TKED), and 421-427 (KMNSGAK). Glutamate 506 is a binding site for ATP. Residue lysine 508 is the N6-AMP-lysine intermediate of the active site. ATP contacts are provided by arginine 513 and arginine 528. Residues glutamate 560 and glutamate 655 each contribute to the Mg(2+) site. Residues lysine 660, arginine 671, and lysine 675 each contribute to the ATP site. The tract at residues 842–917 (AGDEGSSTTG…LATKSSPVKV (76 aa)) is disordered. Low complexity-rich tracts occupy residues 845-854 (EGSSTTGGSS) and 863-877 (SAVSRKAPSKPSAST). Polar residues predominate over residues 884–898 (LSNSNSKDGNMQTAK). A Phosphoserine modification is found at serine 913. The 77-residue stretch at 933 to 1009 (VLLDIFTGVR…IRKRRLVAPC (77 aa)) folds into the BRCT domain.

It belongs to the ATP-dependent DNA ligase family. As to quaternary structure, isoform 3 interacts (via BRCT domain) with the nuclear DNA-repair protein XRCC1. Interacts with POLG. Interacts with POLB. It depends on Mg(2+) as a cofactor. Testis, thymus, prostate and heart.

The protein resides in the mitochondrion. It localises to the nucleus. The catalysed reaction is ATP + (deoxyribonucleotide)n-3'-hydroxyl + 5'-phospho-(deoxyribonucleotide)m = (deoxyribonucleotide)n+m + AMP + diphosphate.. Functionally, isoform 3 functions as a heterodimer with DNA-repair protein XRCC1 in the nucleus and can correct defective DNA strand-break repair and sister chromatid exchange following treatment with ionizing radiation and alkylating agents. Isoform 1 is targeted to mitochondria, where it functions as a DNA ligase in mitochondrial base-excision DNA repair. The polypeptide is DNA ligase 3 (LIG3) (Homo sapiens (Human)).